Consider the following 720-residue polypeptide: Glycine--tRNA ligase beta subunit (720 aa).

This sequence belongs to the class-II aminoacyl-tRNA synthetase family. As to quaternary structure, tetramer of two alpha and two beta subunits.

It is found in the cytoplasm. It catalyses the reaction tRNA(Gly) + glycine + ATP = glycyl-tRNA(Gly) + AMP + diphosphate. This chain is Glycine--tRNA ligase beta subunit, found in Dinoroseobacter shibae (strain DSM 16493 / NCIMB 14021 / DFL 12).